Reading from the N-terminus, the 174-residue chain is NADH-quinone oxidoreductase subunit B (174 aa).

4 residues coordinate [4Fe-4S] cluster: cysteine 53, cysteine 54, cysteine 118, and cysteine 148.

Belongs to the complex I 20 kDa subunit family. NDH-1 is composed of 14 different subunits. Subunits NuoB, C, D, E, F, and G constitute the peripheral sector of the complex. [4Fe-4S] cluster serves as cofactor.

The protein localises to the cell inner membrane. It catalyses the reaction a quinone + NADH + 5 H(+)(in) = a quinol + NAD(+) + 4 H(+)(out). NDH-1 shuttles electrons from NADH, via FMN and iron-sulfur (Fe-S) centers, to quinones in the respiratory chain. Couples the redox reaction to proton translocation (for every two electrons transferred, four hydrogen ions are translocated across the cytoplasmic membrane), and thus conserves the redox energy in a proton gradient. The polypeptide is NADH-quinone oxidoreductase subunit B (Ruegeria sp. (strain TM1040) (Silicibacter sp.)).